We begin with the raw amino-acid sequence, 465 residues long: Siroheme synthase (465 aa).

The segment at 1–203 is precorrin-2 dehydrogenase /sirohydrochlorin ferrochelatase; it reads MEYLPLFHNL…GRTAEAERLL (203 aa). Residues 22-23 and 43-44 each bind NAD(+); these read EI and PS. Serine 128 carries the phosphoserine modification. Residues 216–465 form a uroporphyrinogen-III C-methyltransferase region; it reads GEVYLVGAGP…WFEGAQAAGR (250 aa). Proline 225 is a binding site for S-adenosyl-L-methionine. The active-site Proton acceptor is aspartate 248. The active-site Proton donor is the lysine 270. Residues 301–303, isoleucine 306, 331–332, methionine 383, and glycine 412 contribute to the S-adenosyl-L-methionine site; these read GGD and TA.

It in the N-terminal section; belongs to the precorrin-2 dehydrogenase / sirohydrochlorin ferrochelatase family. This sequence in the C-terminal section; belongs to the precorrin methyltransferase family.

The enzyme catalyses uroporphyrinogen III + 2 S-adenosyl-L-methionine = precorrin-2 + 2 S-adenosyl-L-homocysteine + H(+). It carries out the reaction precorrin-2 + NAD(+) = sirohydrochlorin + NADH + 2 H(+). It catalyses the reaction siroheme + 2 H(+) = sirohydrochlorin + Fe(2+). It functions in the pathway cofactor biosynthesis; adenosylcobalamin biosynthesis; precorrin-2 from uroporphyrinogen III: step 1/1. It participates in cofactor biosynthesis; adenosylcobalamin biosynthesis; sirohydrochlorin from precorrin-2: step 1/1. Its pathway is porphyrin-containing compound metabolism; siroheme biosynthesis; precorrin-2 from uroporphyrinogen III: step 1/1. The protein operates within porphyrin-containing compound metabolism; siroheme biosynthesis; siroheme from sirohydrochlorin: step 1/1. It functions in the pathway porphyrin-containing compound metabolism; siroheme biosynthesis; sirohydrochlorin from precorrin-2: step 1/1. Its function is as follows. Multifunctional enzyme that catalyzes the SAM-dependent methylations of uroporphyrinogen III at position C-2 and C-7 to form precorrin-2 via precorrin-1. Then it catalyzes the NAD-dependent ring dehydrogenation of precorrin-2 to yield sirohydrochlorin. Finally, it catalyzes the ferrochelation of sirohydrochlorin to yield siroheme. This is Siroheme synthase from Stutzerimonas stutzeri (strain A1501) (Pseudomonas stutzeri).